Reading from the N-terminus, the 520-residue chain is GMP synthase [glutamine-hydrolyzing] (520 aa).

The Glutamine amidotransferase type-1 domain occupies 3–200 (AIAIIDFGSQ…FLDIANCKRD (198 aa)). Cysteine 84 acts as the Nucleophile in catalysis. Active-site residues include histidine 175 and glutamate 177. The region spanning 201–386 (WTMKSIIEKQ…IGLSNEIIFQ (186 aa)) is the GMPS ATP-PPase domain. An ATP-binding site is contributed by 228–234 (SGGVDSS).

In terms of assembly, homodimer.

It catalyses the reaction XMP + L-glutamine + ATP + H2O = GMP + L-glutamate + AMP + diphosphate + 2 H(+). The protein operates within purine metabolism; GMP biosynthesis; GMP from XMP (L-Gln route): step 1/1. Its function is as follows. Catalyzes the synthesis of GMP from XMP. This is GMP synthase [glutamine-hydrolyzing] from Wolbachia sp. subsp. Brugia malayi (strain TRS).